The primary structure comprises 382 residues: UBP1-associated proteins 1B (382 aa).

The disordered stretch occupies residues 1 to 99 (MAKEGEERKK…SDESEEIVDS (99 aa)). Basic residues predominate over residues 10–22 (KEKKEKKERKERK). Residues 23 to 34 (RREAEELAVREK) are compositionally biased toward basic and acidic residues. The RRM domain occupies 163-248 (RNIFVRGLGW…RPFNSGKPRE (86 aa)).

It localises to the nucleus. In terms of biological role, acts as a component of a complex regulating the turnover of mRNAs in the nucleus. Binds with high affinity to RNA molecules that contain U-rich sequences in 3'-UTRs. May function in complex with UBP1 and contribute to the stabilization of mRNAs in the nucleus. The sequence is that of UBP1-associated proteins 1B (UBA1B) from Arabidopsis thaliana (Mouse-ear cress).